A 223-amino-acid polypeptide reads, in one-letter code: Ribonuclease HII (223 aa).

Residues 1 to 219 (MMIAGIDEAG…VENIREELEK (219 aa)) form the RNase H type-2 domain. The a divalent metal cation site is built by Asp7, Glu8, and Asp105.

This sequence belongs to the RNase HII family. Mn(2+) serves as cofactor. Mg(2+) is required as a cofactor.

It localises to the cytoplasm. It carries out the reaction Endonucleolytic cleavage to 5'-phosphomonoester.. Its function is as follows. Endonuclease that specifically degrades the RNA of RNA-DNA hybrids. In Methanosarcina acetivorans (strain ATCC 35395 / DSM 2834 / JCM 12185 / C2A), this protein is Ribonuclease HII.